We begin with the raw amino-acid sequence, 404 residues long: MKNPYFPTALGLYFNYLVHGMGVLLMSLNMASLETLWQTNAAGVSIVISSLGIGRLSVLLFAGLLSDRFGRRPFIMLGMCCYMAFFFGILQTNNIIIAYVFGFLAGMANSFLDAGTYPSLMEAFPRSPGTANILIKAFVSSGQFLLPLIISLLVWAELWFGWSFMIAAGIMFINALFLYRCTFPPHPGRRLPVIKKTTSSTEHRCSIIDLASYTLYGYISMATFYLVSQWLAQYGQFVAGMSYTMSIKLLSIYTVGSLLCVFITAPLIRNTVRPTTLLMLYTFISFIALFTVCLHPTFYVVIIFAFVIGFTSAGGVVQIGLTLMAERFPYAKGKATGIYYSAGSIATFTIPLITAHLSQRSIADIMWFDTAIAAIGFLLALFIGLRSRKKTRHHSLKENVAPGG.

The Periplasmic segment spans residues 1–5; it reads MKNPY. The helical transmembrane segment at 6-26 threads the bilayer; it reads FPTALGLYFNYLVHGMGVLLM. The Cytoplasmic segment spans residues 27 to 43; that stretch reads SLNMASLETLWQTNAAG. Residues 44–64 traverse the membrane as a helical segment; it reads VSIVISSLGIGRLSVLLFAGL. At 65-84 the chain is on the periplasmic side; sequence LSDRFGRRPFIMLGMCCYMA. Residues 85 to 105 form a helical membrane-spanning segment; the sequence is FFFGILQTNNIIIAYVFGFLA. At 106–132 the chain is on the cytoplasmic side; sequence GMANSFLDAGTYPSLMEAFPRSPGTAN. Residues 133-153 form a helical membrane-spanning segment; it reads ILIKAFVSSGQFLLPLIISLL. Residues 154-157 are Periplasmic-facing; the sequence is VWAE. The chain crosses the membrane as a helical span at residues 158-178; sequence LWFGWSFMIAAGIMFINALFL. At 179-206 the chain is on the cytoplasmic side; sequence YRCTFPPHPGRRLPVIKKTTSSTEHRCS. The helical transmembrane segment at 207–227 threads the bilayer; that stretch reads IIDLASYTLYGYISMATFYLV. Residues 228 to 246 are Periplasmic-facing; it reads SQWLAQYGQFVAGMSYTMS. The chain crosses the membrane as a helical span at residues 247–267; it reads IKLLSIYTVGSLLCVFITAPL. Topologically, residues 268–273 are cytoplasmic; the sequence is IRNTVR. A helical membrane pass occupies residues 274–294; that stretch reads PTTLLMLYTFISFIALFTVCL. The Periplasmic portion of the chain corresponds to 295–296; the sequence is HP. Residues 297–317 form a helical membrane-spanning segment; the sequence is TFYVVIIFAFVIGFTSAGGVV. The Cytoplasmic segment spans residues 318 to 336; it reads QIGLTLMAERFPYAKGKAT. The chain crosses the membrane as a helical span at residues 337–357; sequence GIYYSAGSIATFTIPLITAHL. Residues 358 to 364 are Periplasmic-facing; sequence SQRSIAD. Residues 365 to 385 form a helical membrane-spanning segment; sequence IMWFDTAIAAIGFLLALFIGL. At 386–404 the chain is on the cytoplasmic side; that stretch reads RSRKKTRHHSLKENVAPGG.

It belongs to the major facilitator superfamily.

The protein localises to the cell inner membrane. The sequence is that of Inner membrane transport protein YdiM (ydiM) from Escherichia coli (strain K12).